A 668-amino-acid chain; its full sequence is tRNA 5-methylaminomethyl-2-thiouridine biosynthesis bifunctional protein MnmC (668 aa).

Residues 1 to 245 form a tRNA (mnm(5)s(2)U34)-methyltransferase region; that stretch reads MKHYSIQPAN…KREMLCGVME (245 aa). The FAD-dependent cmnm(5)s(2)U34 oxidoreductase stretch occupies residues 270–668; sequence IGGGIASALL…LLKGKAVKAG (399 aa).

This sequence in the N-terminal section; belongs to the methyltransferase superfamily. tRNA (mnm(5)s(2)U34)-methyltransferase family. In the C-terminal section; belongs to the DAO family. The cofactor is FAD.

The protein resides in the cytoplasm. The enzyme catalyses 5-aminomethyl-2-thiouridine(34) in tRNA + S-adenosyl-L-methionine = 5-methylaminomethyl-2-thiouridine(34) in tRNA + S-adenosyl-L-homocysteine + H(+). In terms of biological role, catalyzes the last two steps in the biosynthesis of 5-methylaminomethyl-2-thiouridine (mnm(5)s(2)U) at the wobble position (U34) in tRNA. Catalyzes the FAD-dependent demodification of cmnm(5)s(2)U34 to nm(5)s(2)U34, followed by the transfer of a methyl group from S-adenosyl-L-methionine to nm(5)s(2)U34, to form mnm(5)s(2)U34. This is tRNA 5-methylaminomethyl-2-thiouridine biosynthesis bifunctional protein MnmC from Escherichia coli O6:H1 (strain CFT073 / ATCC 700928 / UPEC).